A 954-amino-acid polypeptide reads, in one-letter code: Glycine dehydrogenase (decarboxylating) (954 aa).

Residue Lys-701 is modified to N6-(pyridoxal phosphate)lysine.

It belongs to the GcvP family. The glycine cleavage system is composed of four proteins: P, T, L and H. Pyridoxal 5'-phosphate serves as cofactor.

The enzyme catalyses N(6)-[(R)-lipoyl]-L-lysyl-[glycine-cleavage complex H protein] + glycine + H(+) = N(6)-[(R)-S(8)-aminomethyldihydrolipoyl]-L-lysyl-[glycine-cleavage complex H protein] + CO2. Functionally, the glycine cleavage system catalyzes the degradation of glycine. The P protein binds the alpha-amino group of glycine through its pyridoxal phosphate cofactor; CO(2) is released and the remaining methylamine moiety is then transferred to the lipoamide cofactor of the H protein. In Bordetella pertussis (strain Tohama I / ATCC BAA-589 / NCTC 13251), this protein is Glycine dehydrogenase (decarboxylating).